The sequence spans 1498 residues: Mitogen-activated protein kinase kinase kinase nsy-1 (1498 aa).

2 disordered regions span residues Met1–Tyr35 and Leu190–Thr209. Residues Leu22–Thr33 show a composition bias toward pro residues. The region spanning Ser664–Ile925 is the Protein kinase domain. Residues Leu670–Val678 and Lys693 each bind ATP. The active-site Proton acceptor is Asp790. The disordered stretch occupies residues Ile1022–Pro1050. Over residues Ser1031–Ser1042 the composition is skewed to low complexity. A coiled-coil region spans residues Ser1276–Lys1314. Residues Gln1461–Asn1498 are disordered. A compositionally biased stretch (basic and acidic residues) spans Arg1469–His1479.

It belongs to the protein kinase superfamily. STE Ser/Thr protein kinase family. MAP kinase kinase kinase subfamily. In terms of assembly, interacts with unc-43. Interacts with sek-1. Requires Mg(2+) as cofactor. May be phosphorylated upon pathogenic bacterial infection. May be regulated by proteasomal degradation mediated by the E3-ubiquitin ligase rle-1. In terms of tissue distribution, expressed in intestine, hypodermis, rectal gland cell and neurons including sensory AWC neurons.

The protein resides in the cell projection. The protein localises to the axon. It is found in the perikaryon. The catalysed reaction is L-seryl-[protein] + ATP = O-phospho-L-seryl-[protein] + ADP + H(+). It carries out the reaction L-threonyl-[protein] + ATP = O-phospho-L-threonyl-[protein] + ADP + H(+). Its function is as follows. Serine/threonine-protein kinase which, by phosphorylating and activating sek-1, plays an important role in the activation of the p38 pathway also composed of the downstream effectors sek-1 and pmk-1. Downstream of CaMKII unc-43 and adapter protein tir-1, plays a role in determining asymmetric cell fates in olfactory AWC neurons during neuronal development. Activation results in the repression of odorant receptor str-2 expression in one of the 2 AWC neurons. Involved in resistance to pathogenic Gram-positive and Gram-negative bacterial and fungal infection. Involved in resistance to the nematotoxic C.cinerea galectin Cgl2. Probably by activating the sek1/pmk-1/skn-1 pathway, involved in the up-regulation of gcs-1 and glutathione-S-transferase gst-4 expression upon bacterial infection. Probably downstream of tir-1 and nipi-3, required for the expression of antimicrobial peptide nlp-29 in the epidermis in response to fungal infection or physical injury. Plays a role in resistance to several environmental stresses including oxidative, protein misfolding (ER) and osmotic stresses, and DNA-damaging reagents. Plays a role in the stabilization of transcription factor rnt-1 in the intestine during oxidative stress. Involved in germline apoptosis induced by heavy metals, such as Cu(2+). In addition, plays a role in the up-regulation of gcs-1 upon arsenite treatment, most likely through activation of pmk-1, to confer protection against toxicity induced by heavy metals. Plays a role downstream of tir-1 in regulating susceptibility to anoxia. Involved in egg laying. The sequence is that of Mitogen-activated protein kinase kinase kinase nsy-1 from Caenorhabditis elegans.